We begin with the raw amino-acid sequence, 57 residues long: Thiocillin GE37468 (57 aa).

Residues 1–42 constitute a propeptide, removed in mature form; the sequence is MGNNEEYFIDVNDLSIDVFDVVEQGGAVTALTADHGMPEVGA. Residues 43-44 constitute a cross-link (5-methyloxazole-4-carboxylic acid (Ser-Thr)); that stretch reads ST. The pyridine-2,5-dicarboxylic acid (Ser-Cys) (with S-53) cross-link spans 43 to 52; it reads STNCFCYICC. Positions 43-53 form a cross-link, pyridine-2,5-dicarboxylic acid (Ser-Ser) (with C-52); that stretch reads STNCFCYICCS. Residues 45–46 constitute a cross-link (thiazole-4-carboxylic acid (Asn-Cys)); that stretch reads NC. Residues 47–48 constitute a cross-link (thiazoline-4-carboxylic acid (Phe-Cys)); sequence FC. Ile-50 carries the post-translational modification 5-hydroxy-3-methylproline (Ile). Residues 50-51 constitute a cross-link (thiazole-4-carboxylic acid (Ile-Cys)); it reads IC. Residues 51–52 constitute a cross-link (thiazole-4-carboxylic acid (Cys-Cys)); the sequence is CC. Residues 53–54 constitute a cross-link (thiazole-4-carboxylic acid (Ser-Cys)); the sequence is SC. A 2,3-didehydroalanine (Ser) mark is found at Ser-55 and Ser-56. Position 57 (Asn-57) is a propeptide, removed in mature form.

Post-translationally, maturation of thiazole and oxazole containing antibiotics involves the enzymatic condensation of a Cys, Ser or Thr with the alpha-carbonyl of the preceding amino acid to form a thioether or ether bond, then dehydration to form a double bond with the alpha-amino nitrogen. Thiazoline or oxazoline ring are dehydrogenated to form thiazole or oxazole rings. Maturation of pyridinyl containing antibiotics involves the cross-linking of a Ser and a Cys-Ser pair usually separated by 7 or 8 residues along the peptide chain. The Ser residues are dehydrated to didehydroalanines, then bonded between their beta carbons. The alpha carbonyl of the Cys condenses with alpha carbon of the first Ser to form a pyridinyl ring. The ring may be multiply dehydrogenated to form a pyridine ring with loss of the amino nitrogen of the first Ser.

It localises to the secreted. In terms of biological role, has bacteriocidal activity against both aerobic and anaerobic Gram-positive bacteria. Inhibits growth of B.subtilis (MIC=0.047 ug/ml) and methicillin-resistant S.aureus (MRSA) (MIC=0.047 ug/ml). Has poor activity against Gram-negative bacteria, with the exception of B.fragilis. Inhibits bacterial protein biosynthesis by acting on elongation factor Tu (EF-Tu). Full antibiotic activity depends on the presence of the modified residue Ile-50. The chain is Thiocillin GE37468 (getA) from Streptomyces sp.